Consider the following 34-residue polypeptide: Kappa-theraphotoxin-Scg1a (34 aa).

Disulfide bonds link cysteine 2–cysteine 16, cysteine 9–cysteine 21, and cysteine 15–cysteine 28. The interval 4–6 (YLF) is involved in active face.

Belongs to the neurotoxin 10 (Hwtx-1) family. 09 (HaTx) subfamily. As to expression, expressed by the venom gland.

Its subcellular location is the secreted. Reversibly inhibits potassium currents in oocytes expressing Kv2.1/KCNB1 channels (Kd=2.7 uM). Acts by shifting activation of the channel to more depolarized voltages. The toxin may bind to the S3b-S4 helices of the voltage sensor paddle. One, two, three or four toxin molecules may bind the Kv2.1/KCNB1 channel. It shows low to moderate affinity for lipid bilayers. It partitions into the bilayer membrane, where it stabilizes at the water/membrane interface. The protein is Kappa-theraphotoxin-Scg1a of Stromatopelma calceatum griseipes (Feather leg baboon tarantula).